The primary structure comprises 463 residues: Sodium-coupled neutral amino acid transporter 7 (463 aa).

Ser28 carries the phosphoserine modification. A run of 11 helical transmembrane segments spans residues Ala56–Phe76, Val82–Ile102, Leu130–Ile150, Phe179–Gly199, Phe206–Pro226, Ala240–Val260, Ala283–Phe303, Met320–Leu340, Val372–Ile392, Ile396–Ile416, and Ala429–Phe449.

Belongs to the amino acid/polyamine transporter 2 family. In terms of assembly, interacts with the mTORC1 complex; this interaction mediates the recruitment of mTORC1 to the lysosome and its subsequent activation.

The protein resides in the lysosome membrane. It is found in the cell projection. It localises to the axon. The catalysed reaction is L-asparagine(in) + Na(+)(in) = L-asparagine(out) + Na(+)(out). It carries out the reaction L-glutamine(in) + Na(+)(in) = L-glutamine(out) + Na(+)(out). In terms of biological role, symporter that selectively cotransports sodium ions and amino acids, such as L-glutamine and L-asparagine from the lysosome into the cytoplasm and may participates in mTORC1 activation. The transport activity requires an acidic lysosomal lumen. This Bos taurus (Bovine) protein is Sodium-coupled neutral amino acid transporter 7.